The following is a 357-amino-acid chain: tRNA N6-adenosine threonylcarbamoyltransferase (357 aa).

Residues His-120 and His-124 each contribute to the Fe cation site. Substrate contacts are provided by residues 143–147 (LVSGG), Asp-176, Gly-189, and Asn-289. Position 317 (Asp-317) interacts with Fe cation.

Belongs to the KAE1 / TsaD family. Fe(2+) serves as cofactor.

The protein localises to the cytoplasm. It carries out the reaction L-threonylcarbamoyladenylate + adenosine(37) in tRNA = N(6)-L-threonylcarbamoyladenosine(37) in tRNA + AMP + H(+). Functionally, required for the formation of a threonylcarbamoyl group on adenosine at position 37 (t(6)A37) in tRNAs that read codons beginning with adenine. Is involved in the transfer of the threonylcarbamoyl moiety of threonylcarbamoyl-AMP (TC-AMP) to the N6 group of A37, together with TsaE and TsaB. TsaD likely plays a direct catalytic role in this reaction. This Polynucleobacter necessarius subsp. necessarius (strain STIR1) protein is tRNA N6-adenosine threonylcarbamoyltransferase.